Reading from the N-terminus, the 119-residue chain is Large ribosomal subunit protein bL20 (119 aa).

Belongs to the bacterial ribosomal protein bL20 family.

Binds directly to 23S ribosomal RNA and is necessary for the in vitro assembly process of the 50S ribosomal subunit. It is not involved in the protein synthesizing functions of that subunit. This is Large ribosomal subunit protein bL20 from Listeria innocua serovar 6a (strain ATCC BAA-680 / CLIP 11262).